Reading from the N-terminus, the 436-residue chain is Testican-3 (436 aa).

Positions 1-22 (MLKVSAVLCVCAAAWCSQSLAA) are cleaved as a signal peptide. Disulfide bonds link Cys-90/Cys-101, Cys-95/Cys-111, Cys-139/Cys-169, Cys-142/Cys-162, Cys-151/Cys-183, Cys-317/Cys-341, Cys-352/Cys-359, and Cys-361/Cys-380. The 53-residue stretch at 133–185 (GPILSTCKQCPVVYPSPVCGSDGHTYSFQCKLEYQACVLGKQISVKCEGHCPC) folds into the Kazal-like domain. Residues 314–380 (DPPCQTELSN…GSRINGVADC (67 aa)) form the Thyroglobulin type-1 domain. Residues Ser-387 and Ser-392 are each glycosylated (O-linked (Xyl...) (glycosaminoglycan) serine). The tract at residues 393–436 (GDFHEWTDDEDDEDDIMNDEDEIEDDDEDEGDDDDGGDDHDGYI) is disordered. Residues 399–430 (TDDEDDEDDIMNDEDEIEDDDEDEGDDDDGGD) are compositionally biased toward acidic residues.

Contains chondroitin sulfate and heparan sulfate O-linked oligosaccharides. Expressed in brain.

The protein resides in the secreted. Its subcellular location is the extracellular space. The protein localises to the extracellular matrix. Functionally, may participate in diverse steps of neurogenesis. Inhibits the processing of pro-matrix metalloproteinase 2 (MMP-2) by MT1-MMP and MT3-MMP. May interfere with tumor invasion. The polypeptide is Testican-3 (SPOCK3) (Pongo abelii (Sumatran orangutan)).